Consider the following 175-residue polypeptide: Transcription factor HES-3 (175 aa).

One can recognise a bHLH domain in the interval 1 to 49 (MEKKRRARINLSLEQLRSLLERHYSHQIRKRKLEKADILELSVKYVRSL). One can recognise an Orange domain in the interval 65 to 98 (YPSGFRGGLPGSSQRLRPGEDDSGLRCPLLLQRR). The segment covering 124–145 (PGPPAGGSQSPQSPFPPLGGLL) has biased composition (low complexity). The disordered stretch occupies residues 124–175 (PGPPAGGSQSPQSPFPPLGGLLESSTGILAPPPASNCQAENPRPGFRVWRPW). The WRPW motif signature appears at 172 to 175 (WRPW).

As to quaternary structure, transcription repression requires formation of a complex with a corepressor protein of the Groucho/TLE family. Expressed exclusively in Purkinje cells.

It localises to the nucleus. Its function is as follows. Transcriptional repressor of genes that require a bHLH protein for their transcription. This chain is Transcription factor HES-3 (Hes3), found in Rattus norvegicus (Rat).